Here is a 203-residue protein sequence, read N- to C-terminus: LexA repressor 2 (203 aa).

The segment at residues 28-48 (MREIARHLNVNGTLGVAKHLE) is a DNA-binding region (H-T-H motif). Active-site for autocatalytic cleavage activity residues include Ser122 and Lys159.

This sequence belongs to the peptidase S24 family. Homodimer.

The enzyme catalyses Hydrolysis of Ala-|-Gly bond in repressor LexA.. In terms of biological role, represses a number of genes involved in the response to DNA damage (SOS response), including recA and lexA. In the presence of single-stranded DNA, RecA interacts with LexA causing an autocatalytic cleavage which disrupts the DNA-binding part of LexA, leading to derepression of the SOS regulon and eventually DNA repair. The polypeptide is LexA repressor 2 (Geobacter sulfurreducens (strain ATCC 51573 / DSM 12127 / PCA)).